The chain runs to 70 residues: Homeobox protein OTX2 (70 aa).

Positions 34 to 70 (HQLPGPGATLSPMGTNAVTSHLNQSPASLSTQGYGAS) are disordered. The span at 45-70 (PMGTNAVTSHLNQSPASLSTQGYGAS) shows a compositional bias: polar residues.

It belongs to the paired homeobox family. Bicoid subfamily.

It localises to the nucleus. Its function is as follows. Transcription factor probably involved in the development of the brain and the sense organs. Can bind to the bicoid/BCD target sequence (BTS): 5'-TCTAATCCC-3'. The polypeptide is Homeobox protein OTX2 (Otx2) (Rattus norvegicus (Rat)).